The chain runs to 126 residues: Fluoride-specific ion channel FluC (126 aa).

4 helical membrane-spanning segments follow: residues 5–25, 35–55, 68–88, and 99–119; these read LHFL…WLLG, WGTL…LGLI, ALVT…AEVV, and AAGY…LGLA. Residues Gly-75 and Thr-78 each contribute to the Na(+) site.

It belongs to the fluoride channel Fluc/FEX (TC 1.A.43) family.

The protein resides in the cell inner membrane. The catalysed reaction is fluoride(in) = fluoride(out). With respect to regulation, na(+) is not transported, but it plays an essential structural role and its presence is essential for fluoride channel function. Fluoride-specific ion channel. Important for reducing fluoride concentration in the cell, thus reducing its toxicity. This is Fluoride-specific ion channel FluC from Bordetella avium (strain 197N).